The sequence spans 45 residues: Bomanin Short 1 (45 aa).

The signal sequence occupies residues 1–20 (MKFFSVVTVFVLGLLAVANA). The propeptide at 21–27 (VPLSPDP) is removed by a dipeptidylpeptidase. A disulfide bridge links Cys36 with Cys39. A Glycine amide modification is found at Gly43.

Hemolymph (at protein level).

The protein resides in the secreted. Functionally, secreted immune-induced peptide induced by Toll signaling. Has a role in resistance to bacterial and fungal infections. Has no activity against the fungus C.glabrata in vitro. The polypeptide is Bomanin Short 1 (Drosophila melanogaster (Fruit fly)).